The chain runs to 571 residues: Potassium-transporting ATPase potassium-binding subunit (571 aa).

12 helical membrane passes run 5–25 (GWMQ…PLGG), 64–84 (LAYA…LYAL), 136–156 (GLTH…VALI), 179–199 (LYVL…QGMP), 220–240 (VGPV…GGFF), 254–274 (LSNF…TNVF), 285–305 (WAIL…TYWA), 330–350 (FGIA…CGAV), 375–395 (IIGG…VAIF), 421–441 (MLGI…ATVV), 488–508 (LAIG…AIAG), and 527–547 (GGLF…LTFF).

This sequence belongs to the KdpA family. The system is composed of three essential subunits: KdpA, KdpB and KdpC.

It is found in the cell inner membrane. Functionally, part of the high-affinity ATP-driven potassium transport (or Kdp) system, which catalyzes the hydrolysis of ATP coupled with the electrogenic transport of potassium into the cytoplasm. This subunit binds the periplasmic potassium ions and delivers the ions to the membrane domain of KdpB through an intramembrane tunnel. This is Potassium-transporting ATPase potassium-binding subunit from Methylorubrum extorquens (strain CM4 / NCIMB 13688) (Methylobacterium extorquens).